Consider the following 214-residue polypeptide: Large ribosomal subunit protein uL3 (214 aa).

The interval 134-153 (ATHGNSLSHRAPGSIGQNQT) is disordered. N5-methylglutamine is present on Gln-152.

It belongs to the universal ribosomal protein uL3 family. As to quaternary structure, part of the 50S ribosomal subunit. Forms a cluster with proteins L14 and L19. In terms of processing, methylated by PrmB.

Functionally, one of the primary rRNA binding proteins, it binds directly near the 3'-end of the 23S rRNA, where it nucleates assembly of the 50S subunit. This Buchnera aphidicola subsp. Baizongia pistaciae (strain Bp) protein is Large ribosomal subunit protein uL3.